The sequence spans 163 residues: Nucleotide-binding protein Npun_R4736 (163 aa).

Belongs to the YajQ family.

Functionally, nucleotide-binding protein. The sequence is that of Nucleotide-binding protein Npun_R4736 from Nostoc punctiforme (strain ATCC 29133 / PCC 73102).